The primary structure comprises 575 residues: U3 small nucleolar RNA-associated protein 9 (575 aa).

Basic and acidic residues-rich tracts occupy residues 340-355 (NEKN…KLEE) and 364-375 (VQHEKKETETKI). Positions 340-375 (NEKNNADEADQKKLEEKEEEAQPEVQHEKKETETKI) are disordered. 2 positions are modified to phosphoserine: Ser547 and Ser564.

In terms of assembly, interacts with snoRNA U3. Interacts with MPP10. Component of the ribosomal small subunit (SSU) processome composed of at least 40 protein subunits and snoRNA U3. In the absence of snoRNA3, forms a complex with other t-UTPs. This complex can associate with pre-18S ribosomal RNAs.

The protein localises to the nucleus. The protein resides in the nucleolus. Its function is as follows. Involved in nucleolar processing of pre-18S ribosomal RNA. Required for optimal pre-ribosomal RNA transcription by RNA polymerase I together with a subset of U3 proteins required for transcription (t-UTPs). This chain is U3 small nucleolar RNA-associated protein 9 (UTP9), found in Saccharomyces cerevisiae (strain ATCC 204508 / S288c) (Baker's yeast).